Consider the following 373-residue polypeptide: mRNA export factor rae-1 (373 aa).

Residue Met-1 is modified to N-acetylmethionine. WD repeat units lie at residues 40–82 (APED…TFEG), 87–126 (NIPAPILDIAWIEDSSKIFIACADKEARLWDLASNQVAVV), 128–169 (THDG…NQTQ), and 276–315 (QEIYAVNDICFHPQHGTLVTIGSDGRYSMWDKDARTKLKT).

This sequence belongs to the WD repeat rae1 family. In terms of assembly, the nuclear pore complex (NPC) constitutes the exclusive means of nucleocytoplasmic transport. NPCs allow the passive diffusion of ions and small molecules and the active, nuclear transport receptor-mediated bidirectional transport of macromolecules such as proteins, RNAs, ribonucleoparticles (RNPs), and ribosomal subunits across the nuclear envelope. Interacts with rpm-1. As to expression, expressed along the ventral and dorsal nerve cords.

It is found in the nucleus. The protein localises to the nuclear pore complex. The protein resides in the cell projection. Its subcellular location is the axon. It localises to the synapse. In terms of biological role, functions as a component of the nuclear pore complex (NPC). NPC components, collectively referred to as nucleoporins (NUPs), can play the role of both NPC structural components and of docking or interaction partners for transiently associated nuclear transport factors. It is specifically important for nuclear mRNA export. Has a role in neuronal development, where it acts downstream of rpm-1 to control axon termination and synapse formation in anterior lateral microtubule (ALM) and posterior lateral microtubule (PLM) mechanosensory neurons. The protein is mRNA export factor rae-1 of Caenorhabditis elegans.